A 578-amino-acid polypeptide reads, in one-letter code: CTP synthase 2 (578 aa).

Residues 305–564 (KIALVGKYTN…VAAASGTLGD (260 aa)) enclose the Glutamine amidotransferase type-1 domain. Catalysis depends on for GATase activity residues Cys404, His537, and Glu539.

It belongs to the CTP synthase family. As to quaternary structure, homodimer. Oligomerizes to a tetramer in the presence of its substrates UTP and ATP. The cofactor is Mg(2+).

It localises to the cytoplasm. The catalysed reaction is UTP + L-glutamine + ATP + H2O = CTP + L-glutamate + ADP + phosphate + 2 H(+). It participates in pyrimidine metabolism; CTP biosynthesis via de novo pathway; CTP from UDP: step 2/2. Activated by GTP. Subject to allosteric product inhibition by CTP. Inhibited by p-chloromercuriphenylsulfonic acid, N-ethylmaleimide and cyclopentenylcytosine (CPEC). Functionally, catalyzes the ATP-dependent amination of UTP to CTP with either L-glutamine or ammonia as the source of nitrogen. Plays an important role in the regulation of phospholipid synthesis. The polypeptide is CTP synthase 2 (URA8) (Saccharomyces cerevisiae (strain YJM789) (Baker's yeast)).